A 508-amino-acid polypeptide reads, in one-letter code: Sugar transport protein 12 (508 aa).

Residues 1–22 (MPSVGIVIGDGKKEYPGKLTLY) lie on the Cytoplasmic side of the membrane. The next 12 membrane-spanning stretches (helical) occupy residues 23–43 (VTVT…DIGI), 80–100 (VSLT…SLVA), 118–138 (VLFC…MLIV), 141–161 (LLLG…LSEM), 172–192 (IGFQ…NFFF), 201–221 (LSLG…LILP), 294–314 (LTGI…IGFG), 317–337 (AALI…VVSI), 347–367 (FLFL…AAAI), 383–403 (WYAI…AWSW), 426–446 (ITVS…LMML), and 451–471 (FGLF…VYLF). At 472 to 508 (LPETRGVPIEEMNRVWRSHWYWSKFVDAEKNLTKVVI) the chain is on the cytoplasmic side.

Belongs to the major facilitator superfamily. Sugar transporter (TC 2.A.1.1) family.

The protein resides in the membrane. Its function is as follows. Mediates an active uptake of hexoses, probably by sugar/hydrogen symport. In Arabidopsis thaliana (Mouse-ear cress), this protein is Sugar transport protein 12 (STP12).